Here is a 447-residue protein sequence, read N- to C-terminus: Ion-translocating oxidoreductase complex subunit C (447 aa).

4Fe-4S ferredoxin-type domains lie at 359–389 and 399–430; these read AEVLRDEATVCIHCARCVDVCPMNLLPGRIA and RCREYFALNCIECGECAVVCPAKRHLVQLIRY. Residues C369, C372, C375, C379, C408, C411, C414, and C418 each contribute to the [4Fe-4S] cluster site.

This sequence belongs to the 4Fe4S bacterial-type ferredoxin family. RnfC subfamily. As to quaternary structure, the Rnf complex is probably composed of eight subunits, including RnfA, RnfB, RnfC, RnfD, RnfE and RnfG. [4Fe-4S] cluster serves as cofactor.

It localises to the cell membrane. In terms of biological role, part of a membrane-bound complex that couples electron transfer with translocation of ions across the membrane. Catalyzes Na(+) transport, most probably coupled to electron transfer from reduced ferredoxin to methanophenazine and heterodisulfide reductase. Involved in heterodisulfide reduction during methanogenesis from acetate. The chain is Ion-translocating oxidoreductase complex subunit C from Methanosarcina acetivorans (strain ATCC 35395 / DSM 2834 / JCM 12185 / C2A).